A 656-amino-acid polypeptide reads, in one-letter code: MAPLTKKTNGKRSAKEVSHSEKKLAKKPRISIDSSDEESELSKKEDAVSSSSDDDDLDDLSTSDSEAEEEADELDISDDSEEHENENEEKEGKDKSEGGENGNHTEQRKLLKERKMQRKSGTQVQQIKSVWERLRVKTPPLPKQIREKLSNEIWELSKDCISDLVLKHDASRIVQTLVKYSSKDRREQIVDALKGKFYVLATSAYGKYLLVKLLHYGSRSSRQTIINELHGSLRKLMRHREGAYVVEDLFVLYATHEQRQQMIKEFWGSEYAVFRETHKDLTIEKVCESSIEKRNIIARNLIGTITASVEKGSTGFQILHAAMREYVKIANEKEISEMIELLHEQFAELVHTPEGSDVACTLVARANAKERKLILKALKNHAEKLIKNEYGNIVFITILNCVDDTVLVFKTFSPTVKEHLQEFIIDKFGRRPWLYILLGLDGKYFSPIVKNELLRYIELSKATSKKDPLQRRHELLSKFAPMFLSTISKDYSSILTENLGCQFIAEVLINDELYAQLNEKDQEKYQQVLNNILTTFKGDITEEEHPIHRAFSTRLLKALIQGGKWNNKEKKVIPLKNVQGLGVPFAEKLYDEIIDSSNLLEWINNADSSFTIVALYETLKDQKEGKPFLKDLRGVQSKITTDESNKGSQLLAKLLK.

The segment at 1 to 107 is disordered; it reads MAPLTKKTNG…GGENGNHTEQ (107 aa). The segment covering 13-23 has biased composition (basic and acidic residues); sequence SAKEVSHSEKK. Phosphoserine; by CK2 is present on residues serine 31, serine 34, and serine 35. A phosphoserine mark is found at serine 34 and serine 35. Residues 52–89 are compositionally biased toward acidic residues; that stretch reads SDDDDLDDLSTSDSEAEEEADELDISDDSEEHENENEE. Basic and acidic residues predominate over residues 90 to 107; sequence KEGKDKSEGGENGNHTEQ. Positions 133-483 constitute a PUM-HD domain; sequence RLRVKTPPLP…ELLSKFAPMF (351 aa). Pumilio repeat units lie at residues 155–191, 192–227, 228–264, 340–376, 377–413, and 415–450; these read ELSK…QIVD, ALKG…TIIN, ELHG…QMIK, ELLH…LILK, ALKN…KTFS, and TVKE…PIVK.

The protein belongs to the PUF6 family. Component of the ASH1 mRNP composed of at least PUF6, SHE2, SHE3, SHE1 and the ASH1 mRNA. Interacts with SHE2 and FUN12. In terms of processing, phosphorylation by CK2 relieves translational repression activity.

Its subcellular location is the bud tip. The protein localises to the nucleus. It is found in the nucleolus. Its function is as follows. RNA-binding protein involved in post-transcriptional regulation. Component of the ASH1 mRNP which transports the ASH1 mRNA to the distal tip of the bud, where the ASH1 protein is translated and targeted to the daughter cell nucleus. Binds to the ASH1 3'-UTR containing the PUF consensus UUGU segment and represses its translation. This silencing of ASH1 mRNA is critical for asymmetric seggregation of ASH1 to the daughter cell nucleus. This is Pumilio homology domain family member 6 (PUF6) from Saccharomyces cerevisiae (strain ATCC 204508 / S288c) (Baker's yeast).